Here is an 87-residue protein sequence, read N- to C-terminus: Small ribosomal subunit protein eS21B (87 aa).

Met-1 carries the post-translational modification N-acetylmethionine.

It belongs to the eukaryotic ribosomal protein eS21 family. In terms of assembly, component of the small ribosomal subunit (SSU). Mature yeast ribosomes consist of a small (40S) and a large (60S) subunit. The 40S small subunit contains 1 molecule of ribosomal RNA (18S rRNA) and 33 different proteins (encoded by 57 genes). The large 60S subunit contains 3 rRNA molecules (25S, 5.8S and 5S rRNA) and 46 different proteins (encoded by 81 genes). In terms of processing, N-terminally acetylated by acetyltransferase NatB.

Its subcellular location is the cytoplasm. Component of the ribosome, a large ribonucleoprotein complex responsible for the synthesis of proteins in the cell. The small ribosomal subunit (SSU) binds messenger RNAs (mRNAs) and translates the encoded message by selecting cognate aminoacyl-transfer RNA (tRNA) molecules. The large subunit (LSU) contains the ribosomal catalytic site termed the peptidyl transferase center (PTC), which catalyzes the formation of peptide bonds, thereby polymerizing the amino acids delivered by tRNAs into a polypeptide chain. The nascent polypeptides leave the ribosome through a tunnel in the LSU and interact with protein factors that function in enzymatic processing, targeting, and the membrane insertion of nascent chains at the exit of the ribosomal tunnel. eS21 is required for the processing of the 20S rRNA-precursor to mature 18S rRNA in a late step of the maturation of 40S ribosomal subunits. Has a physiological role leading to 18S rRNA stability. The protein is Small ribosomal subunit protein eS21B of Saccharomyces cerevisiae (strain ATCC 204508 / S288c) (Baker's yeast).